A 2931-amino-acid polypeptide reads, in one-letter code: Probable polyketide synthase 9/36 (2931 aa).

The 432-residue stretch at 11–442 (EKGVAIVGIG…GSNCCLLISE (432 aa)) folds into the Ketosynthase family 3 (KS3) domain. Residues Cys181, His323, and His362 each act as for beta-ketoacyl synthase activity in the active site. An acyl/malonyl transferase region spans residues 635–668 (GVNPSFILGHSLGEISASYCSGMIDLDTFCYTVY). Residue Ser645 is the For acyl/malonyl transferase activity of the active site. An N-terminal hotdog fold region spans residues 925–1047 (IDHLGTSNSY…ANFQLLDHGN (123 aa)). Positions 925-1209 (IDHLGTSNSY…CKSLIPIKDS (285 aa)) constitute a PKS/mFAS DH domain. The active-site Proton acceptor; for dehydratase activity is the His959. The tract at residues 1064–1209 (NLSKLTKNEL…CKSLIPIKDS (146 aa)) is C-terminal hotdog fold. The active-site Proton donor; for dehydratase activity is the Asp1122. Residues 2293 to 2313 (LINFVMASSAISLIGSTDLCT) traverse the membrane as a helical segment. The 78-residue stretch at 2429 to 2506 (TGNKNIDELF…TSMKMILNSL (78 aa)) folds into the Carrier domain. Ser2466 carries the O-(pantetheine 4'-phosphoryl)serine modification. The helical transmembrane segment at 2553–2573 (KIILLTGTTGFLGGFLLFNMV) threads the bilayer.

The cofactor is pantetheine 4'-phosphate.

It is found in the membrane. Its function is as follows. Probable polyketide synthase. The sequence is that of Probable polyketide synthase 9/36 (pks9) from Dictyostelium discoideum (Social amoeba).